Here is a 1140-residue protein sequence, read N- to C-terminus: Envelopment polyprotein (1140 aa).

The first 17 residues, 1 to 17 (MVGWVCISLVVLATTTA), serve as a signal peptide directing secretion. At 18–489 (GLTRNLYELK…VPGLHGWATT (472 aa)) the chain is on the lumenal side. Cystine bridges form between C30–C155, C64–C161, C113–C132, C137–C142, C179–C189, and C214–C251. The N-linked (GlcNAc...) asparagine; by host glycan is linked to N138. N-linked (GlcNAc...) asparagine; by host glycosylation is present at N351. 4 cysteine pairs are disulfide-bonded: C380/C439, C384/C393, C409/C428, and C456/C479. N403 is a glycosylation site (N-linked (GlcNAc...) asparagine; by host). A helical transmembrane segment spans residues 490–510 (ALLITFCFGWLLIPTITMIIL). Topologically, residues 511–631 (KILRLLTFSC…LGVFRYKSRC (121 aa)) are cytoplasmic. Residues 520 to 537 (CSHYSTESKFKAILERVK) are binding to the ribonucleoprotein. 2 consecutive CCHC-type zinc fingers follow at residues 549-569 (CDVCHHECETAKELETHKKSC) and 574-595 (CPYCMTMTESTESALQAHFSIC). Binding to the ribonucleoprotein regions lie at residues 592–609 (FSICKLTNRFQENLKKSL), 596–607 (KLTNRFQENLKK), and 615–629 (KQGCYRTLGVFRYKS). The segment at 611 to 638 (RPEVKQGCYRTLGVFRYKSRCYVGLVWG) is interaction with host TRAF3. One can recognise an ITAM domain in the interval 615 to 638 (KQGCYRTLGVFRYKSRCYVGLVWG). Phosphotyrosine; by host occurs at positions 619 and 632. The YxxL signature appears at 619-622 (YRTL). The helical transmembrane segment at 632–652 (YVGLVWGVLLTTELIVWAASA) threads the bilayer. The Lumenal segment spans residues 653–1108 (DTPLMESGWS…EWLLGILNGN (456 aa)). 8 disulfide bridges follow: C739/C774, C743/C781, C755/C888, C769/C899, C784/C907, C810/C819, C827/C836, and C867/C871. Residues 761–781 (YQYETSWGCNPPDCPGVGTGC) are fusion loop. N931 is a glycosylation site (N-linked (GlcNAc...) asparagine; by host). Intrachain disulfides connect C973/C1003, C996/C1048, C1013/C1018, C1049/C1054, and C1088/C1092. Residues 1109–1129 (WVVVAVLIVILILSILLFSFF) traverse the membrane as a helical segment. A binding to the ribonucleoprotein region spans residues 1125–1140 (LFSFFCPIRGRKNKSN). Over 1130 to 1140 (CPIRGRKNKSN) the chain is Cytoplasmic.

The protein belongs to the hantavirus envelope glycoprotein family. Homodimer. Homotetramer; forms heterotetrameric Gn-Gc spikes in the pre-fusion conformation. Interacts (via C-terminus) with the nucleoprotein. Interacts with host TUFM; this interaction contributes to the virus-induced degradation of mitochondria by autophagy, which leads to degradation of host MAVS and inhibition of type I interferon (IFN) responses. Interacts with host MAP1LC3B; this interaction contributes to the virus-induced degradation of mitochondria by autophagy, which leads to degradation of host MAVS and inhibition of type I interferon (IFN) responses. Interacts (via C-terminus) with host TRAF3 (via N-terminus); this interaction inhibits the formation of TRAF3-TBK1 complexes. As to quaternary structure, homodimer. Homotetramer; forms heterotetrameric Gn-Gc spikes in the pre-fusion conformation. Homotrimer; forms homotrimer in the post-fusion conformation at acidic pH. Interacts (via C-terminus) with the nucleoprotein. In terms of processing, envelope polyprotein precursor is quickly cleaved in vivo just after synthesis, presumably by host signal peptidase.

It localises to the virion membrane. The protein resides in the host cell surface. Its subcellular location is the host Golgi apparatus membrane. It is found in the host endoplasmic reticulum membrane. The protein localises to the host mitochondrion. Its function is as follows. Forms homotetramers with glycoprotein C at the surface of the virion. Attaches the virion to host cell receptors including integrin ITGAV/ITGB3. This attachment induces virion internalization predominantly through clathrin-dependent endocytosis. Mediates the assembly and budding of infectious virus particles through its interaction with the nucleocapsid protein and the viral genome. May dysregulate normal immune and endothelial cell responses through an ITAM motif. Translocates to mitochondria, binds to host TUFM and recruits MAP1LC3B. These interactions induce mitochondrial autophagy and therefore destruction of host MAVS leading to inhibition of type I interferon (IFN) responses. Concomitant breakdown of glycoprotein N is apparently prevented by the nucleoprotein that may inhibit Gn-stimulated autophagosome-lysosome fusion. Interacts with the viral genomic RNA. Inhibits the host RIG-I/TBK1 pathway by disrupting the formation of TBK1-TRAF3 complexes and downstream signaling responses required for IFN-beta transcription. Forms homotetramers with glycoprotein N at the surface of the virion. Attaches the virion to host cell receptors including integrin ITGAV/ITGB3. This attachment induces virion internalization predominantly through clathrin-dependent endocytosis. Class II fusion protein that promotes fusion of viral membrane with host endosomal membrane after endocytosis of the virion. The chain is Envelopment polyprotein (GP) from Homo sapiens (Human).